The primary structure comprises 231 residues: Cytidylate kinase (231 aa).

17–25 (GPTASGKGT) contacts ATP.

This sequence belongs to the cytidylate kinase family. Type 1 subfamily.

The protein resides in the cytoplasm. The catalysed reaction is CMP + ATP = CDP + ADP. It carries out the reaction dCMP + ATP = dCDP + ADP. This Ralstonia pickettii (strain 12J) protein is Cytidylate kinase.